The sequence spans 578 residues: Acyl-coenzyme A synthetase ACSM5, mitochondrial (578 aa).

A mitochondrion-targeting transit peptide spans Met-1–Ile-22. Lys-96 carries the post-translational modification N6-acetyllysine; alternate. Lys-96 is modified (N6-succinyllysine; alternate). Lys-151 is subject to N6-acetyllysine. Residue Thr-229–Lys-237 participates in ATP binding. Position 302 is an N6-acetyllysine; alternate (Lys-302). Lys-302 is subject to N6-succinyllysine; alternate. Lys-335 bears the N6-acetyllysine mark. ATP is bound by residues Glu-367–Ser-372, Asp-454, Arg-469, and Lys-565.

This sequence belongs to the ATP-dependent AMP-binding enzyme family. The cofactor is Mg(2+). Mn(2+) is required as a cofactor.

The protein localises to the mitochondrion matrix. It carries out the reaction a medium-chain fatty acid + ATP + CoA = a medium-chain fatty acyl-CoA + AMP + diphosphate. Functionally, catalyzes the activation of fatty acids by CoA to produce an acyl-CoA, the first step in fatty acid metabolism. This Mus musculus (Mouse) protein is Acyl-coenzyme A synthetase ACSM5, mitochondrial (Acsm5).